A 258-amino-acid chain; its full sequence is Spindlin-2 (258 aa).

A disordered region spans residues 1–47 (MKTPHKKATARQQTREIVDDHTLSASMRKKKISQKKQRGRPSSQTRR). Basic and acidic residues predominate over residues 13-22 (QTREIVDDHT). A compositionally biased stretch (basic residues) spans 27-39 (MRKKKISQKKQRG). Tudor-like domain stretches follow at residues 50-99 (VGCR…LELH), 129-178 (IGKA…YQLL), and 210-255 (IGKH…YDLV). Histone H3K4me3 and H3R8me2a binding regions lie at residues glutamate 138 and 246-248 (DFH).

It belongs to the SPIN/STSY family. As to quaternary structure, interacts with C11orf84/SPINDOC.

It localises to the nucleus. May be involved in the regulation of cell cycle progression. Exhibits H3K4me3-binding activity. The protein is Spindlin-2 (SPIN2) of Bos taurus (Bovine).